Here is a 400-residue protein sequence, read N- to C-terminus: Casein kinase I homolog hhp2 (400 aa).

The Protein kinase domain maps to 12–278 (YRIGRKIGSG…YLRKLFRDLL (267 aa)). ATP is bound by residues 18 to 26 (IGSGSFGQI) and lysine 41. Catalysis depends on aspartate 131, which acts as the Proton acceptor. Residues 330-352 (PNYSSIPLPAERNPKTPQSFSTN) form a disordered region.

It belongs to the protein kinase superfamily. CK1 Ser/Thr protein kinase family. Casein kinase I subfamily.

The protein localises to the nucleus. It carries out the reaction L-seryl-[protein] + ATP = O-phospho-L-seryl-[protein] + ADP + H(+). The enzyme catalyses L-threonyl-[protein] + ATP = O-phospho-L-threonyl-[protein] + ADP + H(+). Its function is as follows. Involved in DNA repair. May regulate the activity of protein(s) involved in double strand break repair caused by gamma rays. The polypeptide is Casein kinase I homolog hhp2 (hhp2) (Schizosaccharomyces pombe (strain 972 / ATCC 24843) (Fission yeast)).